The following is a 672-amino-acid chain: ATP-dependent zinc metalloprotease FtsH 1 (672 aa).

Residues 1-22 (MKKDSESNSSDKSNKEELSTGR) form a disordered region. The Cytoplasmic segment spans residues 1–23 (MKKDSESNSSDKSNKEELSTGRR). Residues 24–44 (GGNPMIIALVITVLAAMLFFN) traverse the membrane as a helical segment. At 45-141 (QPEPSSLISA…KFSPPDNTAA (97 aa)) the chain is on the periplasmic side. A helical transmembrane segment spans residues 142-162 (ILNLLILVGLPLAIFFFIFMM). The Cytoplasmic segment spans residues 163 to 672 (IRRTRNDMMG…TSNASARRED (510 aa)). 237–244 (GPPGTGKT) provides a ligand contact to ATP. His-458 lines the Zn(2+) pocket. Glu-459 is an active-site residue. Positions 462 and 534 each coordinate Zn(2+). Positions 642–672 (RLGDEEGKVEQIMAPEGAAERTSNASARRED) are disordered. Residues 662 to 672 (RTSNASARRED) show a composition bias toward polar residues.

The protein in the central section; belongs to the AAA ATPase family. It in the C-terminal section; belongs to the peptidase M41 family. In terms of assembly, homohexamer. The cofactor is Zn(2+).

Its subcellular location is the cell inner membrane. Acts as a processive, ATP-dependent zinc metallopeptidase for both cytoplasmic and membrane proteins. Plays a role in the quality control of integral membrane proteins. In Rhodopirellula baltica (strain DSM 10527 / NCIMB 13988 / SH1), this protein is ATP-dependent zinc metalloprotease FtsH 1.